The following is a 374-amino-acid chain: Chaperone protein DnaJ (374 aa).

The J domain occupies 5–70 (DYYEVLGVER…SKRAAFDQYG (66 aa)). The CR-type zinc-finger motif lies at 133–211 (GTTVSIRVPT…CHGEGRVEEY (79 aa)). Zn(2+)-binding residues include Cys146, Cys149, Cys163, Cys166, Cys185, Cys188, Cys199, and Cys202. CXXCXGXG motif repeat units follow at residues 146-153 (CQPCDGSG), 163-170 (CPTCGGIG), 185-192 (CPRCHGQG), and 199-206 (CTSCHGEG).

This sequence belongs to the DnaJ family. In terms of assembly, homodimer. The cofactor is Zn(2+).

The protein resides in the cytoplasm. Its function is as follows. Participates actively in the response to hyperosmotic and heat shock by preventing the aggregation of stress-denatured proteins and by disaggregating proteins, also in an autonomous, DnaK-independent fashion. Unfolded proteins bind initially to DnaJ; upon interaction with the DnaJ-bound protein, DnaK hydrolyzes its bound ATP, resulting in the formation of a stable complex. GrpE releases ADP from DnaK; ATP binding to DnaK triggers the release of the substrate protein, thus completing the reaction cycle. Several rounds of ATP-dependent interactions between DnaJ, DnaK and GrpE are required for fully efficient folding. Also involved, together with DnaK and GrpE, in the DNA replication of plasmids through activation of initiation proteins. This is Chaperone protein DnaJ from Pseudomonas putida (strain ATCC 700007 / DSM 6899 / JCM 31910 / BCRC 17059 / LMG 24140 / F1).